We begin with the raw amino-acid sequence, 428 residues long: Serine--tRNA ligase (428 aa).

L-serine is bound at residue 235–237 (TAE). 266–268 (RSE) contributes to the ATP binding site. Residue Glu289 participates in L-serine binding. 353–356 (EISS) is an ATP binding site. Ser389 serves as a coordination point for L-serine.

This sequence belongs to the class-II aminoacyl-tRNA synthetase family. Type-1 seryl-tRNA synthetase subfamily. In terms of assembly, homodimer. The tRNA molecule binds across the dimer.

Its subcellular location is the cytoplasm. It catalyses the reaction tRNA(Ser) + L-serine + ATP = L-seryl-tRNA(Ser) + AMP + diphosphate + H(+). The enzyme catalyses tRNA(Sec) + L-serine + ATP = L-seryl-tRNA(Sec) + AMP + diphosphate + H(+). The protein operates within aminoacyl-tRNA biosynthesis; selenocysteinyl-tRNA(Sec) biosynthesis; L-seryl-tRNA(Sec) from L-serine and tRNA(Sec): step 1/1. Functionally, catalyzes the attachment of serine to tRNA(Ser). Is also able to aminoacylate tRNA(Sec) with serine, to form the misacylated tRNA L-seryl-tRNA(Sec), which will be further converted into selenocysteinyl-tRNA(Sec). The polypeptide is Serine--tRNA ligase (Shewanella loihica (strain ATCC BAA-1088 / PV-4)).